The primary structure comprises 226 residues: 7-cyano-7-deazaguanine synthase (226 aa).

Residue 10–20 (LSGGLDSATAA) coordinates ATP. Zn(2+) is bound by residues C191, C199, C202, and C205.

Belongs to the QueC family. Requires Zn(2+) as cofactor.

It carries out the reaction 7-carboxy-7-deazaguanine + NH4(+) + ATP = 7-cyano-7-deazaguanine + ADP + phosphate + H2O + H(+). It participates in purine metabolism; 7-cyano-7-deazaguanine biosynthesis. In terms of biological role, catalyzes the ATP-dependent conversion of 7-carboxy-7-deazaguanine (CDG) to 7-cyano-7-deazaguanine (preQ(0)). The chain is 7-cyano-7-deazaguanine synthase from Synechococcus sp. (strain CC9902).